Reading from the N-terminus, the 541-residue chain is Chaperonin GroEL 2 (541 aa).

ATP-binding positions include 29–32, 86–90, Gly-413, 476–478, and Asp-492; these read TLGP, DGTTT, and NAA.

Belongs to the chaperonin (HSP60) family. As to quaternary structure, forms a cylinder of 14 subunits composed of two heptameric rings stacked back-to-back. Interacts with the co-chaperonin GroES.

The protein localises to the secreted. The protein resides in the capsule. Its subcellular location is the cell surface. It is found in the cell wall. It catalyses the reaction ATP + H2O + a folded polypeptide = ADP + phosphate + an unfolded polypeptide.. Together with its co-chaperonin GroES, plays an essential role in assisting protein folding. The GroEL-GroES system forms a nano-cage that allows encapsulation of the non-native substrate proteins and provides a physical environment optimized to promote and accelerate protein folding. The protein is Chaperonin GroEL 2 of Mycobacterium sp. (strain KMS).